The primary structure comprises 428 residues: Gamma-glutamyl phosphate reductase (428 aa).

It belongs to the gamma-glutamyl phosphate reductase family.

The protein localises to the cytoplasm. It carries out the reaction L-glutamate 5-semialdehyde + phosphate + NADP(+) = L-glutamyl 5-phosphate + NADPH + H(+). Its pathway is amino-acid biosynthesis; L-proline biosynthesis; L-glutamate 5-semialdehyde from L-glutamate: step 2/2. Functionally, catalyzes the NADPH-dependent reduction of L-glutamate 5-phosphate into L-glutamate 5-semialdehyde and phosphate. The product spontaneously undergoes cyclization to form 1-pyrroline-5-carboxylate. This Hyphomonas neptunium (strain ATCC 15444) protein is Gamma-glutamyl phosphate reductase.